Consider the following 288-residue polypeptide: Probable endonuclease 4 (288 aa).

Zn(2+) is bound by residues histidine 75, histidine 115, glutamate 153, aspartate 187, histidine 190, histidine 224, aspartate 237, histidine 239, and glutamate 269.

The protein belongs to the AP endonuclease 2 family. Zn(2+) serves as cofactor.

It carries out the reaction Endonucleolytic cleavage to 5'-phosphooligonucleotide end-products.. Endonuclease IV plays a role in DNA repair. It cleaves phosphodiester bonds at apurinic or apyrimidinic (AP) sites, generating a 3'-hydroxyl group and a 5'-terminal sugar phosphate. This Chlamydia trachomatis serovar A (strain ATCC VR-571B / DSM 19440 / HAR-13) protein is Probable endonuclease 4.